Reading from the N-terminus, the 475-residue chain is Glycogen synthase (475 aa).

Lys-15 contacts ADP-alpha-D-glucose.

It belongs to the glycosyltransferase 1 family. Bacterial/plant glycogen synthase subfamily.

It catalyses the reaction [(1-&gt;4)-alpha-D-glucosyl](n) + ADP-alpha-D-glucose = [(1-&gt;4)-alpha-D-glucosyl](n+1) + ADP + H(+). Its pathway is glycan biosynthesis; glycogen biosynthesis. Synthesizes alpha-1,4-glucan chains using ADP-glucose. The sequence is that of Glycogen synthase from Chlamydia felis (strain Fe/C-56) (Chlamydophila felis).